Reading from the N-terminus, the 438-residue chain is Ubiquitin carboxyl-terminal hydrolase 27 (438 aa).

In terms of domain architecture, USP spans 78–421; it reads RGLINLGNTC…EGYLLFYHKQ (344 aa). Cys-87 functions as the Nucleophile in the catalytic mechanism. The Proton acceptor role is filled by His-380.

This sequence belongs to the peptidase C19 family. As to quaternary structure, interacts with phosphorylated BCL2L11 isoform BIMEL; this interaction leads to BCL2L11 deubiquitination and stabilization.

It is found in the cytoplasm. The protein localises to the cytosol. Its subcellular location is the nucleus. The enzyme catalyses Thiol-dependent hydrolysis of ester, thioester, amide, peptide and isopeptide bonds formed by the C-terminal Gly of ubiquitin (a 76-residue protein attached to proteins as an intracellular targeting signal).. Deubiquitinase involved in innate antiviral immunity by mediating deubiquitination of CGAS and RIGI. Negatively regulates RIGI by mediating 'Lys-63'-linked deubiquitination of RIGI, inhibiting type I interferon signaling. Also regulates 'Lys-63'-linked ubiquitination level of MDA5/IFIH1. Acts as a positive regulator of the cGAS-STING pathway by catalyzing 'Lys-48'-linked deubiquitination of CGAS, thereby promoting its stabilization. Can reduce the levels of BCL2L11/BIM ubiquitination and stabilize BCL2L11 in response to the RAF-MAPK-degradation signal. By acting on BCL2L11 levels, may counteract the anti-apoptotic effects of MAPK activity. This Mus musculus (Mouse) protein is Ubiquitin carboxyl-terminal hydrolase 27.